We begin with the raw amino-acid sequence, 155 residues long: Ribosome maturation factor RimP (155 aa).

It belongs to the RimP family.

It is found in the cytoplasm. Its function is as follows. Required for maturation of 30S ribosomal subunits. This is Ribosome maturation factor RimP from Hamiltonella defensa subsp. Acyrthosiphon pisum (strain 5AT).